The following is a 628-amino-acid chain: MLSRLLIVPLIFALAGLAISAPVNDGTEADNDERAASLLVHLKGDKDGGGLTGSPDGVSAGTTDGTDSSKELAGGAVDSSPDTTDTPDASSSDIFPDTNNRDTSVETTGNPDDSDAPDAAESAGSQDTTDAADASEAVAETVDTYDIPDTDGADDREKVSTEVSTEDLDSAGVDKSPESDSTESPGSDSAESPGSDSAESPGSDSTESPGSDSTESPRSDSTDEVLTDVQADSADVTSDDMDEATETDKDDDKSDDKSDADAATDKDDSDEDKDTELDGKAHAEDTQTEEAADSDSKQGAADSDSDTDDDRPEKDVKNDSDDSKDTTEDDKPDKDDKKNRDSADNSNDDSDEMIQVPREELEQQEINLKEGGVIGSQEETVASDMEEGSDVGDQKPGPEDSIEEGSPVGRQDFKHPQDSEEEELEKEAKKEKELEEAEEERTLKTIESDSQEDSVDESEAEPDSNSKKDIGTSDAPEPQEDDSEEDTDDSMMKEPKDSDDAESDKDDKDKNDMDKEDMDKDDMDKDDMDKDDMDKDDVDKDASDSVDDQSESDAEPGADSHTVVDEIDGEETMTPDSEEIMKSGEMDSVVEATEVPADILDQPDQQDDMTQGASQAADAAATALAAQS.

The N-terminal stretch at 1 to 20 (MLSRLLIVPLIFALAGLAIS) is a signal peptide. A disordered region spans residues 43–628 (KGDKDGGGLT…AAATALAAQS (586 aa)). The span at 78-93 (DSSPDTTDTPDASSSD) shows a compositional bias: low complexity. The segment covering 182-214 (TESPGSDSAESPGSDSAESPGSDSTESPGSDST) has biased composition (polar residues). Composition is skewed to basic and acidic residues over residues 246-266 (ETDK…ATDK), 276-285 (ELDGKAHAED), and 311-343 (RPEK…RDSA). A glycan (N-linked (GlcNAc...) asparagine) is linked at asparagine 318. 5 stretches are compositionally biased toward acidic residues: residues 449–462 (DSQE…EAEP), 477–489 (EPQE…DTDD), 514–536 (DKED…MDKD), 544–556 (DSVD…DAEP), and 565–578 (DEID…PDSE). The segment covering 613-628 (ASQAADAAATALAAQS) has biased composition (low complexity).

In terms of tissue distribution, specifically expressed in otolith matrix-producing cells.

Its subcellular location is the secreted. It localises to the extracellular space. The protein resides in the extracellular matrix. Its function is as follows. Calcium-binding component of otoliths, a calcium carbonate structure of the inner ear involved in hearing and balance sensing. Binds calcium. The protein is Otolith matrix protein OMM-64 of Oncorhynchus mykiss (Rainbow trout).